The primary structure comprises 141 residues: Large ribosomal subunit protein uL11 (141 aa).

It belongs to the universal ribosomal protein uL11 family. In terms of assembly, part of the ribosomal stalk of the 50S ribosomal subunit. Interacts with L10 and the large rRNA to form the base of the stalk. L10 forms an elongated spine to which L12 dimers bind in a sequential fashion forming a multimeric L10(L12)X complex. One or more lysine residues are methylated.

Forms part of the ribosomal stalk which helps the ribosome interact with GTP-bound translation factors. The sequence is that of Large ribosomal subunit protein uL11 from Ruegeria pomeroyi (strain ATCC 700808 / DSM 15171 / DSS-3) (Silicibacter pomeroyi).